The following is a 130-amino-acid chain: Small ribosomal subunit protein uS9 (130 aa).

The disordered stretch occupies residues 105-130; it reads TRDPRMKERKKYGLKGARRAPQFSKR. Residues 111 to 130 are compositionally biased toward basic residues; the sequence is KERKKYGLKGARRAPQFSKR.

The protein belongs to the universal ribosomal protein uS9 family.

The chain is Small ribosomal subunit protein uS9 from Bacillus pumilus (strain SAFR-032).